The chain runs to 383 residues: MSATLKLTEALIACHSVTPADGGCQDLIAKRLQAIGFHAESVVSGPENFQVTNLWAIKKGKAGDQGKVLMFAGHTDVVPTGPLEKWTSDPFTPTIRDGMLYGRGAADMKTSLASFVVATEEFVTTHPDHQGSIAFLITSDEEGPANDGTVIMCERLQKHGQRLDYCVIGEPTSVNTLGDMIKNGRRGSLSGKLRVKGIQAHIAYPHLGQNPIHLSAPAISALVETQWDKGNEYFQPTSFQISNVHAGTGANNVIPGKLVVDFNFRFSTESKPEQLRERLEKILKDAGLEFEIDWVLGGSPFITGDGDLAGALRKAIKAETKIDTELSTTGGTSDGRFIAKICKEVVEFGPLNATSHKIDECVIVDDVVPLKNIYRKTLEQLIA.

Residue H74 participates in Zn(2+) binding. D76 is a catalytic residue. D107 contacts Zn(2+). Catalysis depends on E141, which acts as the Proton acceptor. 3 residues coordinate Zn(2+): E142, E170, and H356.

It belongs to the peptidase M20A family. DapE subfamily. Homodimer. Zn(2+) is required as a cofactor. Co(2+) serves as cofactor.

The catalysed reaction is N-succinyl-(2S,6S)-2,6-diaminopimelate + H2O = (2S,6S)-2,6-diaminopimelate + succinate. The protein operates within amino-acid biosynthesis; L-lysine biosynthesis via DAP pathway; LL-2,6-diaminopimelate from (S)-tetrahydrodipicolinate (succinylase route): step 3/3. Catalyzes the hydrolysis of N-succinyl-L,L-diaminopimelic acid (SDAP), forming succinate and LL-2,6-diaminopimelate (DAP), an intermediate involved in the bacterial biosynthesis of lysine and meso-diaminopimelic acid, an essential component of bacterial cell walls. This chain is Succinyl-diaminopimelate desuccinylase, found in Polynucleobacter necessarius subsp. necessarius (strain STIR1).